The primary structure comprises 303 residues: Succinate--CoA ligase [ADP-forming] subunit alpha (303 aa).

CoA contacts are provided by residues 20–23 (TGSE), lysine 46, and 108–110 (ITE). Tyrosine 173 contacts substrate. The active-site Tele-phosphohistidine intermediate is histidine 259.

It belongs to the succinate/malate CoA ligase alpha subunit family. Heterotetramer of two alpha and two beta subunits.

The enzyme catalyses succinate + ATP + CoA = succinyl-CoA + ADP + phosphate. It carries out the reaction GTP + succinate + CoA = succinyl-CoA + GDP + phosphate. It participates in carbohydrate metabolism; tricarboxylic acid cycle; succinate from succinyl-CoA (ligase route): step 1/1. In terms of biological role, succinyl-CoA synthetase functions in the citric acid cycle (TCA), coupling the hydrolysis of succinyl-CoA to the synthesis of either ATP or GTP and thus represents the only step of substrate-level phosphorylation in the TCA. The alpha subunit of the enzyme binds the substrates coenzyme A and phosphate, while succinate binding and nucleotide specificity is provided by the beta subunit. The polypeptide is Succinate--CoA ligase [ADP-forming] subunit alpha (Mycobacterium bovis (strain ATCC BAA-935 / AF2122/97)).